The chain runs to 77 residues: Pollen allergen Amb p 5b (77 aa).

A signal peptide spans 1-22 (MNNEKNVSFEFIGSTNEVDEIK). Intrachain disulfides connect cysteine 26–cysteine 61, cysteine 33–cysteine 48, and cysteine 40–cysteine 54.

It localises to the secreted. In Ambrosia psilostachya (Western ragweed), this protein is Pollen allergen Amb p 5b.